A 97-amino-acid polypeptide reads, in one-letter code: MSRISADDVRKVAKLARLDLPEEKIATYTGQLESILEYVGQLESIDTEGVPETTRAVEVTNVTREDGVTPTPVREDILNQAPQREGDFFRVPKILAD.

It belongs to the GatC family. Heterotrimer of A, B and C subunits.

It catalyses the reaction L-glutamyl-tRNA(Gln) + L-glutamine + ATP + H2O = L-glutaminyl-tRNA(Gln) + L-glutamate + ADP + phosphate + H(+). The catalysed reaction is L-aspartyl-tRNA(Asn) + L-glutamine + ATP + H2O = L-asparaginyl-tRNA(Asn) + L-glutamate + ADP + phosphate + 2 H(+). Functionally, allows the formation of correctly charged Asn-tRNA(Asn) or Gln-tRNA(Gln) through the transamidation of misacylated Asp-tRNA(Asn) or Glu-tRNA(Gln) in organisms which lack either or both of asparaginyl-tRNA or glutaminyl-tRNA synthetases. The reaction takes place in the presence of glutamine and ATP through an activated phospho-Asp-tRNA(Asn) or phospho-Glu-tRNA(Gln). This is Aspartyl/glutamyl-tRNA(Asn/Gln) amidotransferase subunit C from Parasynechococcus marenigrum (strain WH8102).